A 131-amino-acid polypeptide reads, in one-letter code: Glycine cleavage system H protein (131 aa).

In terms of domain architecture, Lipoyl-binding spans 24-106 (RVTVGISDHA…YGEGWIFVVE (83 aa)). K65 is modified (N6-lipoyllysine).

It belongs to the GcvH family. In terms of assembly, the glycine cleavage system is composed of four proteins: P, T, L and H. (R)-lipoate is required as a cofactor.

Its function is as follows. The glycine cleavage system catalyzes the degradation of glycine. The H protein shuttles the methylamine group of glycine from the P protein to the T protein. This is Glycine cleavage system H protein from Xanthomonas campestris pv. campestris (strain 8004).